Reading from the N-terminus, the 279-residue chain is 4-diphosphocytidyl-2-C-methyl-D-erythritol kinase (279 aa).

Lys-9 is an active-site residue. 93 to 103 (PMGAGLGGGSS) is a binding site for ATP. The active site involves Asp-135.

It belongs to the GHMP kinase family. IspE subfamily.

The catalysed reaction is 4-CDP-2-C-methyl-D-erythritol + ATP = 4-CDP-2-C-methyl-D-erythritol 2-phosphate + ADP + H(+). Its pathway is isoprenoid biosynthesis; isopentenyl diphosphate biosynthesis via DXP pathway; isopentenyl diphosphate from 1-deoxy-D-xylulose 5-phosphate: step 3/6. Functionally, catalyzes the phosphorylation of the position 2 hydroxy group of 4-diphosphocytidyl-2C-methyl-D-erythritol. This chain is 4-diphosphocytidyl-2-C-methyl-D-erythritol kinase, found in Acinetobacter baylyi (strain ATCC 33305 / BD413 / ADP1).